Consider the following 275-residue polypeptide: MQVGIVARKGSERAVAVADELRDAVAGAGASVWLDAETADALGEPAAGREVDALADCDLAVAVGGDGTFLFVARNAGDTPIVGVNLGEVGFLNAVPPEAAEEAVVSEVEAFDRGEMNVREAPRLAARTDEWTSVPAANEVVIQGARRGPGAGIDYEVRVDGSRYAGGHADGVLVATPTGSTAYNLSEGGPLVHPAVSGLVVNEMVAEEGMPPIVVDADATVTVAVEGVDEVVVASDGRNVTTLPAPTEVTVERTTPPMRIAGPPSDFFAALEKLS.

Aspartate 66 acts as the Proton acceptor in catalysis. NAD(+)-binding positions include aspartate 66–glycine 67, asparagine 138–glutamate 139, histidine 168, aspartate 170, threonine 181–serine 186, and valine 205.

The protein belongs to the NAD kinase family. A divalent metal cation is required as a cofactor.

The protein localises to the cytoplasm. The enzyme catalyses NAD(+) + ATP = ADP + NADP(+) + H(+). Involved in the regulation of the intracellular balance of NAD and NADP, and is a key enzyme in the biosynthesis of NADP. Catalyzes specifically the phosphorylation on 2'-hydroxyl of the adenosine moiety of NAD to yield NADP. This chain is NAD kinase, found in Halorubrum lacusprofundi (strain ATCC 49239 / DSM 5036 / JCM 8891 / ACAM 34).